We begin with the raw amino-acid sequence, 198 residues long: Recombination protein RecR (198 aa).

Residues 58–73 (CKVCQTLTDKEICPIC) form a C4-type zinc finger. The Toprim domain occupies 81-175 (KVIMVVENTR…KVSRIASGVP (95 aa)).

The protein belongs to the RecR family.

Its function is as follows. May play a role in DNA repair. It seems to be involved in an RecBC-independent recombinational process of DNA repair. It may act with RecF and RecO. The sequence is that of Recombination protein RecR from Lachnoclostridium phytofermentans (strain ATCC 700394 / DSM 18823 / ISDg) (Clostridium phytofermentans).